The primary structure comprises 256 residues: Probable enoyl-CoA hydratase echA14 (256 aa).

The disordered stretch occupies residues 235–256; sequence GPQAKSVQSPEFAARLAAAQHR.

The protein belongs to the enoyl-CoA hydratase/isomerase family.

It catalyses the reaction a (3S)-3-hydroxyacyl-CoA = a (2E)-enoyl-CoA + H2O. The enzyme catalyses a 4-saturated-(3S)-3-hydroxyacyl-CoA = a (3E)-enoyl-CoA + H2O. Functionally, could possibly oxidize fatty acids using specific components. This is Probable enoyl-CoA hydratase echA14 (echA14) from Mycobacterium tuberculosis (strain CDC 1551 / Oshkosh).